A 105-amino-acid polypeptide reads, in one-letter code: N(4)-acetylcytidine amidohydrolase (105 aa).

The ASCH domain maps to 7-93 (TFFERFEHDI…VIAEIYPGLE (87 aa)). The Proton acceptor role is filled by K21. T24 functions as the Nucleophile in the catalytic mechanism. E74 serves as the catalytic Proton donor.

Belongs to the N(4)-acetylcytidine amidohydrolase family.

The enzyme catalyses N(4)-acetylcytidine + H2O = cytidine + acetate + H(+). The catalysed reaction is N(4)-acetyl-2'-deoxycytidine + H2O = 2'-deoxycytidine + acetate + H(+). It carries out the reaction N(4)-acetylcytosine + H2O = cytosine + acetate + H(+). Functionally, catalyzes the hydrolysis of N(4)-acetylcytidine (ac4C). The sequence is that of N(4)-acetylcytidine amidohydrolase from Shewanella baltica (strain OS155 / ATCC BAA-1091).